Here is a 165-residue protein sequence, read N- to C-terminus: 3-isopropylmalate dehydratase small subunit (165 aa).

This sequence belongs to the LeuD family. LeuD type 2 subfamily. In terms of assembly, heterodimer of LeuC and LeuD.

The catalysed reaction is (2R,3S)-3-isopropylmalate = (2S)-2-isopropylmalate. It functions in the pathway amino-acid biosynthesis; L-leucine biosynthesis; L-leucine from 3-methyl-2-oxobutanoate: step 2/4. Functionally, catalyzes the isomerization between 2-isopropylmalate and 3-isopropylmalate, via the formation of 2-isopropylmaleate. This chain is 3-isopropylmalate dehydratase small subunit, found in Desulfovibrio desulfuricans (strain ATCC 27774 / DSM 6949 / MB).